The following is a 79-amino-acid chain: RNA-binding protein Hfq (79 aa).

The region spanning 10–69 is the Sm domain; that stretch reads DPFLNALRKEHVPVSIYLVNGIKLQGNIESFDQYVVLLRNTVTQMVYKHAISTVVPARPV.

It belongs to the Hfq family. Homohexamer.

In terms of biological role, RNA chaperone that binds small regulatory RNA (sRNAs) and mRNAs to facilitate mRNA translational regulation in response to envelope stress, environmental stress and changes in metabolite concentrations. Also binds with high specificity to tRNAs. This chain is RNA-binding protein Hfq, found in Burkholderia cenocepacia (strain HI2424).